The primary structure comprises 185 residues: uncharacterized protein (185 aa).

3 consecutive transmembrane segments (helical) span residues 9–29 (LVAA…WAFL), 72–92 (VLFF…ILIV), and 111–131 (FFFI…IPFL).

It is found in the cell membrane. This is an uncharacterized protein from Bacillus subtilis (strain 168).